A 129-amino-acid chain; its full sequence is Glycine cleavage system H protein (129 aa).

In terms of domain architecture, Lipoyl-binding spans 24 to 106; the sequence is TYTVGITEHA…YAGGWIFKIK (83 aa). Position 65 is an N6-lipoyllysine (K65).

Belongs to the GcvH family. The glycine cleavage system is composed of four proteins: P, T, L and H. (R)-lipoate serves as cofactor.

Functionally, the glycine cleavage system catalyzes the degradation of glycine. The H protein shuttles the methylamine group of glycine from the P protein to the T protein. The chain is Glycine cleavage system H protein from Shigella dysenteriae serotype 1 (strain Sd197).